The chain runs to 472 residues: Alanine--anticapsin ligase (472 aa).

Glutamate 109 is a binding site for Mg(2+). ATP is bound by residues lysine 138 and lysine 178. The ATP-grasp domain occupies 142-355 (RAAFNRAGVK…MAQLLLDVLC (214 aa)). Leucine 182 is a Mg(2+) binding site. Residues 184 to 185 (SS), 226 to 229 (EEFL), and glutamine 268 contribute to the ATP site. Substrate contacts are provided by residues glutamate 273 and 309–311 (HTE). Residues glutamate 311 and glutamate 324 each contribute to the Mg(2+) site. 328–331 (RFAG) contributes to the substrate binding site.

In terms of assembly, monomer or homodimer. It depends on Mg(2+) as a cofactor.

The catalysed reaction is L-anticapsin + L-alanine + ATP = bacilysin + ADP + phosphate + H(+). Its pathway is antibiotic biosynthesis; bacilysin biosynthesis. In terms of biological role, part of the bacABCDEFG operon responsible for the biosynthesis of bacilysin, an irreversible inactivator of the glutaminase domain of glucosamine synthetase. Catalyzes the formation of alpha-dipeptides from various L-amino acids in the presence of ATP. In vivo catalyzes the ligation of L-alanine and L-anticapsin (epoxycyclohexanonyl-Ala) to produce the final bacilysin antibiotic (L-Ala-L-4S-cyclohexenonyl-Ala dipeptide). The protein is Alanine--anticapsin ligase of Bacillus subtilis.